Reading from the N-terminus, the 163-residue chain is Photosystem II extrinsic protein V (163 aa).

The N-terminal stretch at 1–26 (MFRRLIGVVVATALLTFQLIVGSATA) is a signal peptide. The heme c site is built by Cys63, Cys66, His67, and His118.

It belongs to the cytochrome c family. PsbV subfamily. In terms of assembly, PSII is composed of 1 copy each of membrane proteins PsbA, PsbB, PsbC, PsbD, PsbE, PsbF, PsbH, PsbI, PsbJ, PsbK, PsbL, PsbM, PsbT, PsbX, PsbY, PsbZ, Psb30/Ycf12, peripheral proteins PsbO, CyanoQ (PsbQ), PsbU, PsbV and a large number of cofactors. It forms dimeric complexes. Heme c serves as cofactor.

Its subcellular location is the cellular thylakoid membrane. Functionally, one of the extrinsic, lumenal subunits of photosystem II (PSII). PSII is a light-driven water plastoquinone oxidoreductase, using light energy to abstract electrons from H(2)O, generating a proton gradient subsequently used for ATP formation. The extrinsic proteins stabilize the structure of photosystem II oxygen-evolving complex (OEC), the ion environment of oxygen evolution and protect the OEC against heat-induced inactivation. Low-potential cytochrome c that plays a role in the OEC of PSII. The polypeptide is Photosystem II extrinsic protein V (Nostoc sp. (strain PCC 7120 / SAG 25.82 / UTEX 2576)).